Reading from the N-terminus, the 274-residue chain is 5-deoxy-glucuronate isomerase (274 aa).

It belongs to the isomerase IolB family.

It carries out the reaction 5-deoxy-D-glucuronate = 5-dehydro-2-deoxy-D-gluconate. Its pathway is polyol metabolism; myo-inositol degradation into acetyl-CoA; acetyl-CoA from myo-inositol: step 4/7. Functionally, involved in the isomerization of 5-deoxy-glucuronate (5DG) to 5-dehydro-2-deoxy-D-gluconate (DKG or 2-deoxy-5-keto-D-gluconate). This chain is 5-deoxy-glucuronate isomerase, found in Geobacillus thermodenitrificans (strain NG80-2).